A 92-amino-acid chain; its full sequence is Islet amyloid polypeptide (92 aa).

An N-terminal signal peptide occupies residues 1–22 (MCLLRLPVTLLVLCVALNELKA). Residues 23-34 (TSIASDTGHQVG) constitute a propeptide that is removed on maturation. A disulfide bridge connects residues C38 and C43. At Y73 the chain carries Tyrosine amide. The propeptide occupies 77-92 (NAPQISDRELLHYLPL).

Belongs to the calcitonin family. As to quaternary structure, can form homodimers. Interacts with IDE and INS. Interaction with INS inhibits homodimerization and fibril formation.

It localises to the secreted. Functionally, amylin/IAPP is a glucoregulatory peptide hormone that plays an important role in the regulation of energy homeostasis. Selectively inhibits insulin-stimulated glucose utilization and glycogen deposition in muscle, while not affecting adipocyte glucose metabolism. IAPP function is mediated by the CALCR-RAMPs (AMYRs) receptor complexes. Amylin can also bind CALCR receptor in the absence of RAMPs, although it is more selective for AMYRs. The chain is Islet amyloid polypeptide (IAPP) from Cavia porcellus (Guinea pig).